The chain runs to 144 residues: Fluoride-specific ion channel FluC 1 (144 aa).

4 helical membrane passes run 11-31 (LIYIIVGIAGILGALSRYYLG), 44-64 (LATLLINLIGCFFLAWLTTYI), 74-94 (VITGIGTGFIGSFTTFSTFSV), and 107-127 (IAFLYVSCSILGGLIMSGLGY). Gly84 and Thr87 together coordinate Na(+).

Belongs to the fluoride channel Fluc/FEX (TC 1.A.43) family.

Its subcellular location is the cell membrane. It carries out the reaction fluoride(in) = fluoride(out). With respect to regulation, na(+) is not transported, but it plays an essential structural role and its presence is essential for fluoride channel function. Its function is as follows. Fluoride-specific ion channel. Important for reducing fluoride concentration in the cell, thus reducing its toxicity. This chain is Fluoride-specific ion channel FluC 1, found in Bacillus cereus (strain ATCC 14579 / DSM 31 / CCUG 7414 / JCM 2152 / NBRC 15305 / NCIMB 9373 / NCTC 2599 / NRRL B-3711).